The following is a 158-amino-acid chain: 6,7-dimethyl-8-ribityllumazine synthase (158 aa).

5-amino-6-(D-ribitylamino)uracil contacts are provided by residues F22, 56 to 58 (ALE), and 80 to 82 (VVI). Residue 85–86 (ET) coordinates (2S)-2-hydroxy-3-oxobutyl phosphate. The active-site Proton donor is H88. N113 contributes to the 5-amino-6-(D-ribitylamino)uracil binding site. Residue R127 coordinates (2S)-2-hydroxy-3-oxobutyl phosphate.

Belongs to the DMRL synthase family.

The enzyme catalyses (2S)-2-hydroxy-3-oxobutyl phosphate + 5-amino-6-(D-ribitylamino)uracil = 6,7-dimethyl-8-(1-D-ribityl)lumazine + phosphate + 2 H2O + H(+). The protein operates within cofactor biosynthesis; riboflavin biosynthesis; riboflavin from 2-hydroxy-3-oxobutyl phosphate and 5-amino-6-(D-ribitylamino)uracil: step 1/2. Catalyzes the formation of 6,7-dimethyl-8-ribityllumazine by condensation of 5-amino-6-(D-ribitylamino)uracil with 3,4-dihydroxy-2-butanone 4-phosphate. This is the penultimate step in the biosynthesis of riboflavin. The sequence is that of 6,7-dimethyl-8-ribityllumazine synthase from Neisseria gonorrhoeae (strain ATCC 700825 / FA 1090).